The following is an 89-amino-acid chain: uncharacterized protein (89 aa).

Transmembrane regions (helical) follow at residues 1–21 and 28–48; these read MFLALTSIAIPAAIVIPISLI and GISLTFSMTIGFVGLILTIAA.

The protein resides in the cell membrane. This is an uncharacterized protein from Methanocaldococcus jannaschii (strain ATCC 43067 / DSM 2661 / JAL-1 / JCM 10045 / NBRC 100440) (Methanococcus jannaschii).